Here is a 31-residue protein sequence, read N- to C-terminus: U8-ctenitoxin-Co1a (31 aa).

2 disulfide bridges follow: Cys4/Cys18 and Cys11/Cys24.

In terms of tissue distribution, expressed by the venom gland.

Its subcellular location is the secreted. Its function is as follows. Blocks voltage-gated sodium channels (Nav). This is U8-ctenitoxin-Co1a from Ctenus ornatus (Brazilian spider).